We begin with the raw amino-acid sequence, 305 residues long: 5'-hydroxyaverantin dehydrogenase stcG (305 aa).

NADP(+) is bound by residues Ser-25, Leu-27, Gln-48, Asp-68, Tyr-186, Lys-190, and Ser-221. Tyr-186 serves as the catalytic Proton acceptor. Catalysis depends on Lys-190, which acts as the Lowers pKa of active site Tyr.

Belongs to the short-chain dehydrogenases/reductases (SDR) family.

It catalyses the reaction (1'S,5'S)-5'-hydroxyaverantin + NAD(+) = (S)-5'-oxoaverantin + NADH + H(+). The enzyme catalyses (1'S,5'R)-5'-hydroxyaverantin + NAD(+) = (S)-5'-oxoaverantin + NADH + 2 H(+). The protein operates within mycotoxin biosynthesis; sterigmatocystin biosynthesis. In terms of biological role, 5'-hydroxyaverantin dehydrogenase; part of the gene cluster that mediates the biosynthesis of sterigmatocystin (ST), a polyketide-derived furanocoumarin which is part of the most toxic and carcinogenic compounds among the known mycotoxins. The first step in the biosynthesis of sterigmatocystin is the production of hexanoate by the fatty acid synthase (FAS) units stcJ and stcK. The polyketide backbone is assembled by the non-reducing polyketide synthase stcA by condensation of the starter hexanoyl-CoA and 7 malonyl-CoA extender units followed by cyclization and release of norsolorinic acid. Norsolorinic acid is the first stable intermediate in the biosynthesis of sterigmatocystin and is converted into averantin (AVN) by the ketoreductase stcE which reduces the hexanoate ketone to an alcohol. Averantin is then oxidized into 5'-hydroxyaverantin (HAVN) by the cytochrome P450 monooxygenase stcF. 5'-hydroxyaverantin is further converted to 5'-oxyaverantin (OAVN) by the 5'-hydroxyaverantin dehydrogenase stcG. The next step is the conversion of OAVN into averufin (AVF) which is catalyzed by a yet to be identified enzyme. The cytochrome P450 monooxygenase stcB and the flavin-binding monooxygenase stcW are both required for the conversion of averufin to 1-hydroxyversicolorone. The esterase stcI probably catalyzes the formation of versiconal hemiacetal acetate from 1-hydroxyversicolorone. The oxydoreductase stcN then probably catalyzes the biosynthetic step from versiconal to versicolorin B (VERB). The next step is performed by the versicolorin B desaturase stcL to produce versicolorin A (VERA). The ketoreductase stcU and the cytochrome P450 monooxygenase stcS are involved in the conversion of versicolorin A to demethylsterigmatocystin. The Baeyer-Villiger oxidas stcQ and the reductase stcR might be involved in the biosynthetic step from versicolorin A to demethylsterigmatocystin. The final step in the biosynthesis of sterigmatocystin is the methylation of demethylsterigmatocystin catalyzed by the methyltransferase stcP. This chain is 5'-hydroxyaverantin dehydrogenase stcG, found in Emericella nidulans (strain FGSC A4 / ATCC 38163 / CBS 112.46 / NRRL 194 / M139) (Aspergillus nidulans).